The chain runs to 496 residues: MIDLKQYEFWFLVGSQYLYGLETLKKVEQQASKIVDSLNDDPIFPSKIVLKPVLKSSSEITEIFEKANADPKCAGVIVWMHTFSPSKMWIRGLSINKKPLLHLHTQYNREIPWDTIDMDYMNLNQSAHGDREHGFIHARMRLPRKVVVGHWEEKEVREKIAKWMRVACAIQDGRMGQIVRFGDNMREVASTEGDKVEAQIKLGWSINTWGVGELAERVKAVPEREVEELLKEYREKYIMPEDEYSLKAIREQAKIEIALREFLKEKNAVGFTTTFEDLHDLPQLPGLAVQRLMEEGYGFGAEGDWKAAGLVRAIKVMGTSLPGGTSFMEDYTYHLTPGNELVLGAHMLEVCPTIAKEKPRIEVHPLSIGGKADPARLVFDGQEGPAVNASIVDMGNRFRLVVNKVLSVPIERKMPKLPTARVLWKPLPDFKRATTAWILAGGSHHTAFSTAIDVEYLIDWAEALEIEYVVIDENLDLEDFKKELRWNELYWGLLKR.

Residues glutamate 302, glutamate 329, histidine 346, and histidine 445 each coordinate Mn(2+).

It belongs to the arabinose isomerase family. Mn(2+) serves as cofactor.

It catalyses the reaction beta-L-arabinopyranose = L-ribulose. It functions in the pathway carbohydrate degradation; L-arabinose degradation via L-ribulose; D-xylulose 5-phosphate from L-arabinose (bacterial route): step 1/3. In terms of biological role, catalyzes the conversion of L-arabinose to L-ribulose. The protein is L-arabinose isomerase of Thermotoga maritima (strain ATCC 43589 / DSM 3109 / JCM 10099 / NBRC 100826 / MSB8).